The primary structure comprises 156 residues: Translation initiation factor IF-1, chloroplastic (156 aa).

The disordered stretch occupies residues 1 to 35; it reads MAASLTLMTSPPCSRSSKSPSPSPSPSLSCNQQQQ. Residues 1 to 49 constitute a chloroplast transit peptide; it reads MAASLTLMTSPPCSRSSKSPSPSPSPSLSCNQQQQYKPLLHHQWPPQIS. The span at 10-20 shows a compositional bias: low complexity; that stretch reads SPPCSRSSKSP. In terms of domain architecture, S1-like spans 72 to 148; sequence GGSPSVQEQK…TRGRITYRLR (77 aa).

The protein belongs to the IF-1 family. Component of the 30S ribosomal translation pre-initiation complex which assembles on the 30S ribosome in the order IF-2 and IF-3, IF-1 and N-formylmethionyl-tRNA(fMet); mRNA recruitment can occur at any time during PIC assembly.

Its subcellular location is the plastid. It localises to the chloroplast. Its function is as follows. One of the essential components for the initiation of protein synthesis. Stabilizes the binding of IF-2 and IF-3 on the 30S subunit to which N-formylmethionyl-tRNA(fMet) subsequently binds. Helps modulate mRNA selection, yielding the 30S pre-initiation complex (PIC). Upon addition of the 50S ribosomal subunit IF-1, IF-2 and IF-3 are released leaving the mature 70S translation initiation complex. The polypeptide is Translation initiation factor IF-1, chloroplastic (infA) (Mesembryanthemum crystallinum (Common ice plant)).